Consider the following 376-residue polypeptide: Ribosomal RNA large subunit methyltransferase G (376 aa).

The protein belongs to the methyltransferase superfamily. RlmG family.

The protein localises to the cytoplasm. It catalyses the reaction guanosine(1835) in 23S rRNA + S-adenosyl-L-methionine = N(2)-methylguanosine(1835) in 23S rRNA + S-adenosyl-L-homocysteine + H(+). Functionally, specifically methylates the guanine in position 1835 (m2G1835) of 23S rRNA. This Klebsiella pneumoniae subsp. pneumoniae (strain ATCC 700721 / MGH 78578) protein is Ribosomal RNA large subunit methyltransferase G.